A 106-amino-acid chain; its full sequence is uncharacterized protein (106 aa).

Residues 1–31 (MKKKTKIILSLLAALIVILIVLPVLSPVVFT) form the signal peptide.

This is an uncharacterized protein from Bacillus subtilis (strain 168).